Here is a 511-residue protein sequence, read N- to C-terminus: Lysine--tRNA ligase (511 aa).

Mg(2+) is bound by residues Glu422 and Glu429.

Belongs to the class-II aminoacyl-tRNA synthetase family. In terms of assembly, homodimer. Mg(2+) is required as a cofactor.

It is found in the cytoplasm. The catalysed reaction is tRNA(Lys) + L-lysine + ATP = L-lysyl-tRNA(Lys) + AMP + diphosphate. This Chlorobaculum tepidum (strain ATCC 49652 / DSM 12025 / NBRC 103806 / TLS) (Chlorobium tepidum) protein is Lysine--tRNA ligase.